The sequence spans 453 residues: uncharacterized protein (453 aa).

This sequence to S.faecalis plasmid PAM373 EP0012.

This is an uncharacterized protein from Listeria innocua serovar 6a (strain ATCC BAA-680 / CLIP 11262).